The chain runs to 497 residues: Transcription termination/antitermination protein NusA (497 aa).

The region spanning 135–200 is the S1 motif domain; sequence GKILTGIVKK…RGAQLFVTRS (66 aa). The KH domain maps to 302–372; that stretch reads RHTIDIAVDS…LKIDQKISNI (71 aa). 2 repeat units span residues 364–414 and 439–489. A 2 X 51 AA approximate repeats region spans residues 364–489; sequence KIDQKISNIL…MLIMAARNIC (126 aa).

This sequence belongs to the NusA family. In terms of assembly, monomer. Binds directly to the core enzyme of the DNA-dependent RNA polymerase and to nascent RNA.

It is found in the cytoplasm. In terms of biological role, participates in both transcription termination and antitermination. This is Transcription termination/antitermination protein NusA from Buchnera aphidicola subsp. Baizongia pistaciae (strain Bp).